The primary structure comprises 154 residues: 3-hydroxyacyl-[acyl-carrier-protein] dehydratase FabZ (154 aa).

His-54 is an active-site residue.

It belongs to the thioester dehydratase family. FabZ subfamily.

The protein resides in the cytoplasm. It carries out the reaction a (3R)-hydroxyacyl-[ACP] = a (2E)-enoyl-[ACP] + H2O. Its function is as follows. Involved in unsaturated fatty acids biosynthesis. Catalyzes the dehydration of short chain beta-hydroxyacyl-ACPs and long chain saturated and unsaturated beta-hydroxyacyl-ACPs. The chain is 3-hydroxyacyl-[acyl-carrier-protein] dehydratase FabZ from Shewanella baltica (strain OS223).